The chain runs to 121 residues: Large ribosomal subunit protein uL18 (121 aa).

It belongs to the universal ribosomal protein uL18 family. As to quaternary structure, part of the 50S ribosomal subunit; part of the 5S rRNA/L5/L18/L25 subcomplex. Contacts the 5S and 23S rRNAs.

This is one of the proteins that bind and probably mediate the attachment of the 5S RNA into the large ribosomal subunit, where it forms part of the central protuberance. The polypeptide is Large ribosomal subunit protein uL18 (Paracidovorax citrulli (strain AAC00-1) (Acidovorax citrulli)).